A 305-amino-acid chain; its full sequence is Translation initiation factor eIF2B subunit alpha (305 aa).

It belongs to the eIF-2B alpha/beta/delta subunits family. As to quaternary structure, component of the translation initiation factor 2B (eIF2B) complex which is a heterodecamer of two sets of five different subunits: alpha, beta, gamma, delta and epsilon. Subunits alpha, beta and delta comprise a regulatory subcomplex and subunits epsilon and gamma comprise a catalytic subcomplex. Within the complex, the hexameric regulatory complex resides at the center, with the two heterodimeric catalytic subcomplexes bound on opposite sides.

It localises to the cytoplasm. The protein localises to the cytosol. Activated by the chemical integrated stress response (ISR) inhibitor ISRIB which stimulates guanine nucleotide exchange factor activity for both phosphorylated and unphosphorylated eIF2. In terms of biological role, acts as a component of the translation initiation factor 2B (eIF2B) complex, which catalyzes the exchange of GDP for GTP on eukaryotic initiation factor 2 (eIF2) gamma subunit. Its guanine nucleotide exchange factor activity is repressed when bound to eIF2 complex phosphorylated on the alpha subunit, thereby limiting the amount of methionyl-initiator methionine tRNA available to the ribosome and consequently global translation is repressed. The sequence is that of Translation initiation factor eIF2B subunit alpha (EIF2B1) from Bos taurus (Bovine).